Reading from the N-terminus, the 298-residue chain is RNA exonuclease 4 (298 aa).

Residues 1–73 adopt a coiled-coil conformation; that stretch reads MRKTVRKNKQ…EAKLKLKSAT (73 aa). One can recognise an Exonuclease domain in the interval 125–275; it reads FFSIDCKIIE…RDTIINVILY (151 aa).

The protein belongs to the REXO4 family.

The protein resides in the nucleus. The protein is RNA exonuclease 4 (rexo4) of Dictyostelium discoideum (Social amoeba).